The sequence spans 955 residues: Iron-responsive element-binding protein 2 (955 aa).

Residues Cys504, Cys570, and Cys573 each coordinate [4Fe-4S] cluster.

This sequence belongs to the aconitase/IPM isomerase family. [4Fe-4S] cluster serves as cofactor. Ubiquitinated and degraded by the proteasome in presence of high level of iron and oxygen.

The protein resides in the cytoplasm. RNA-binding protein that binds to iron-responsive elements (IRES), which are stem-loop structures found in the 5'-UTR of ferritin, and delta aminolevulinic acid synthase mRNAs, and in the 3'-UTR of transferrin receptor mRNA. Binding to the IRE element in ferritin results in the repression of its mRNA translation. Binding of the protein to the transferrin receptor mRNA inhibits the degradation of this otherwise rapidly degraded mRNA. The polypeptide is Iron-responsive element-binding protein 2 (ireb2) (Xenopus laevis (African clawed frog)).